Reading from the N-terminus, the 834-residue chain is Enhancer of filamentation 1 (834 aa).

The tract at residues 1-505 is required for interaction with ITCH; the sequence is MKYKNLMARA…HQILSQTSHD (505 aa). The 63-residue stretch at 3–65 folds into the SH3 domain; sequence YKNLMARALY…PGNRVKLLIG (63 aa). Phosphotyrosine; by ABL1 occurs at positions 92, 164, 166, 177, 189, 214, and 223. Residues 102–229 form an interacts strongly with spindle-regulatory protein D1M1 region; the sequence is RDTIYQVPPS…KGVYAIPPSA (128 aa). Residues 238–260 are disordered; the sequence is EKDYDFPPPMRQAGRPDLRPEGV. Position 279 is a phosphotyrosine; by ABL1 (Y279). The disordered stretch occupies residues 291 to 316; that stretch reads ARRHQSLSPNHPPPQLGQSVGSQNDA. S296 is subject to Phosphoserine. The span at 306–315 shows a compositional bias: polar residues; it reads LGQSVGSQND. A Phosphotyrosine; by ABL1 modification is found at Y317. Disordered stretches follow at residues 328–398 and 560–623; these read PPAE…SPAQ and GPGS…GSER. Over residues 332 to 344 the composition is skewed to basic and acidic residues; the sequence is TSEKANPQERDGV. Positions 351–834 are interacts with CTTN; that stretch reads NPPDAKGSRD…KRSLLEMATF (484 aa). The short motif at 360-363 is the Caspase cleavage related site element; that stretch reads DLVD. S369 is subject to Phosphoserine. A compositionally biased stretch (low complexity) spans 369–395; it reads SFSSTGSTRSNMSTSSTSSKESSLSAS. Positions 710–760 are divergent helix-loop-helix motif; the sequence is FYYDQCETHFISLLNAIDALFSCVSSAQPPRIFVAHSKFVILSAHKLVFIG. A required for interaction with PLK1 region spans residues 710 to 834; it reads FYYDQCETHF…KRSLLEMATF (125 aa). A Phosphoserine; by CSNK1D and CSNK1E modification is found at S780. The residue at position 804 (T804) is a Phosphothreonine; by CSNK1E.

The protein belongs to the CAS family. In terms of assembly, homodimer. Forms heterodimers with BCAR1/p130cas. Forms complexes with PTK2B/RAFTK, adapter protein CRKL and LYN kinase. Part of a complex composed of NEDD9, AURKA and CTTN; within the complex NEDD9 acts as a scaffold protein and is required for complex formation. Part of a ternary complex composed of SMAD3, ITCH/AIP4 and NEDD9/HEF1; within the complex NEDD9/HEF1 interacts (via N-terminus) with ITCH/AIP4 (via WW domains); the complex mediates ubiquitination and proteasomal degradation of NEDD9/HEF1. Interacts with SMAD3; the interaction promotes NEDD9 ubiquitination and proteasomal degradation. Interacts with ID2. Interacts with CTTN (via N-terminus). Interacts with MICAL. Interacts with TXNL4/DIM1. Interacts with BCAR3 (via Ras-GEF domain). Interacts with SH2D3C isoform 1 and isoform 2. Interacts with ECT2. Interacts with PTPN11/SHP-2 (via SH2 domains); the interaction is enhanced when NEDD9/CAS-L is tyrosine phosphorylated. Interacts (via C-terminus) with PLK1 (via polo box domains). Interacts with NKX2-5. Interacts with SMAD3; the interaction is inhibited by oxidation of NEDD9. Interacts with NEDD9/HEF1; interaction is induced by CXCL12 promotion of ABL-mediated phosphorylation of NEDD9/HEF1. Interacts (via SH3 domain) with PTK2/FAK. Interacts with FYN; in the presence of PTK2. Interacts with INPPL1/SHIP2. Cell cycle-regulated processing produces four isoforms: p115, p105, p65, and p55. Isoform p115 arises from p105 phosphorylation and appears later in the cell cycle. Isoform p55 arises from p105 as a result of cleavage at a caspase cleavage-related site and it appears specifically at mitosis. The p65 isoform is poorly detected. Post-translationally, polyubiquitinated by ITCH/AIP4, leading to proteasomal degradation. In terms of processing, PTK2/FAK1 phosphorylates the protein at the YDYVHL motif (conserved among all cas proteins) following integrin stimulation. The SRC family kinases (FYN, SRC, LCK and CRK) are recruited to the phosphorylated sites and can phosphorylate other tyrosine residues. Ligation of either integrin beta-1 or B-cell antigen receptor on tonsillar B-cells and B-cell lines promotes tyrosine phosphorylation and both integrin and BCR-mediated tyrosine phosphorylation requires an intact actin network. Phosphorylation is required to recruit NEDD9 to T-cell receptor microclusters at the periphery of newly formed immunological synapses. In fibroblasts transformation with oncogene v-ABL results in an increase in tyrosine phosphorylation. Transiently phosphorylated following CD3 cross-linking and this phosphorylated form binds to CRKL and C3G. A mutant lacking the SH3 domain is phosphorylated upon CD3 cross-linking but not upon integrin beta-1 cross-linking. Tyrosine phosphorylation occurs upon stimulation of the G-protein coupled C1a calcitonin receptor. Calcitonin-stimulated tyrosine phosphorylation is mediated by calcium- and protein kinase C-dependent mechanisms and requires the integrity of the actin cytoskeleton. Phosphorylation at Ser-369 induces proteasomal degradation. Phosphorylated by LYN. Phosphorylation at Ser-780 by CSNK1D or CSNK1E, or phosphorylation of Thr-804 by CSNK1E enhances the interaction of NEDD9 with PLK1. In terms of tissue distribution, expressed in B-cells (at protein level). Expressed in the respiratory epithelium of the main bronchi to the bronchioles in the lungs (at protein level). High levels detected in kidney, lung, and placenta. Expressed in lymphocytes.

Its subcellular location is the cytoplasm. The protein resides in the cell cortex. It localises to the nucleus. The protein localises to the golgi apparatus. It is found in the cell projection. Its subcellular location is the lamellipodium. The protein resides in the cell junction. It localises to the focal adhesion. The protein localises to the cytoskeleton. It is found in the spindle pole. Its subcellular location is the cilium. The protein resides in the cilium basal body. It localises to the basolateral cell membrane. The protein localises to the spindle. Scaffolding protein which plays a central coordinating role for tyrosine-kinase-based signaling related to cell adhesion. As a focal adhesion protein, plays a role in embryonic fibroblast migration. May play an important role in integrin beta-1 or B cell antigen receptor (BCR) mediated signaling in B- and T-cells. Integrin beta-1 stimulation leads to recruitment of various proteins including CRKL and SHPTP2 to the tyrosine phosphorylated form. Promotes adhesion and migration of lymphocytes; as a result required for the correct migration of lymphocytes to the spleen and other secondary lymphoid organs. Plays a role in the organization of T-cell F-actin cortical cytoskeleton and the centralization of T-cell receptor microclusters at the immunological synapse. Negatively regulates cilia outgrowth in polarized cysts. Modulates cilia disassembly via activation of AURKA-mediated phosphorylation of HDAC6 and subsequent deacetylation of alpha-tubulin. Positively regulates RANKL-induced osteoclastogenesis. Required for the maintenance of hippocampal dendritic spines in the dentate gyrus and CA1 regions, thereby involved in spatial learning and memory. In Homo sapiens (Human), this protein is Enhancer of filamentation 1.